A 292-amino-acid polypeptide reads, in one-letter code: Probable starch degradation products transport system permease protein AmyD (292 aa).

The next 6 helical transmembrane spans lie at 15 to 35 (WLFIAPTLLSLIIVVLIPFII), 77 to 97 (FAVACIVIINVVGLSLAMLVT), 110 to 130 (FYLPNLIGGLILGFIWNFIFV), 156 to 176 (FWGLVIVTSWQMIGYVMVIYI), 205 to 225 (VFPLIAPAFTVSLFITLSNSF), and 260 to 280 (MAVGQAKAVIMFLIIAVISVI). Positions 71–281 (IIFTAKFAVA…LIIAVISVIQ (211 aa)) constitute an ABC transmembrane type-1 domain.

The protein belongs to the binding-protein-dependent transport system permease family. MalFG subfamily.

It is found in the cell membrane. Its function is as follows. Probably part of a binding-protein-dependent transport system starch degradation products. Probably responsible for the translocation of the substrate across the membrane. This chain is Probable starch degradation products transport system permease protein AmyD (amyD), found in Thermoanaerobacterium thermosulfurigenes (Clostridium thermosulfurogenes).